A 434-amino-acid chain; its full sequence is Serine/threonine transporter SstT (434 aa).

9 consecutive transmembrane segments (helical) span residues 14 to 34 (IVIGIIVGAVLGVMVPSWSFI), 41 to 61 (FVGALKAIAPLLVFLLIMSAI), 72 to 92 (FGTVIVLYLSATLFSSIAAVA), 135 to 155 (ALVEGNYLAILFWSLLIGSGL), 172 to 192 (TVSAVAQNVIQFAPFGIVGLL), 210 to 230 (LLMLLVATMVFVYLVVYPFMV), 282 to 302 (ISIPLGGSANSGGAAITVSIM), 316 to 336 (IFLALLLCFLSAISATGVSGI), and 351 to 371 (FGISNDIAMQVVGIGFIIGVV). The interval 414–434 (KGTAEVVTPEKANEAEESEQV) is disordered.

This sequence belongs to the dicarboxylate/amino acid:cation symporter (DAACS) (TC 2.A.23) family.

It is found in the cell membrane. It catalyses the reaction L-serine(in) + Na(+)(in) = L-serine(out) + Na(+)(out). It carries out the reaction L-threonine(in) + Na(+)(in) = L-threonine(out) + Na(+)(out). Involved in the import of serine and threonine into the cell, with the concomitant import of sodium (symport system). This is Serine/threonine transporter SstT from Lacticaseibacillus paracasei (strain ATCC 334 / BCRC 17002 / CCUG 31169 / CIP 107868 / KCTC 3260 / NRRL B-441) (Lactobacillus paracasei).